Here is a 409-residue protein sequence, read N- to C-terminus: Runt-related transcription factor 3 (409 aa).

Disordered regions lie at residues 1-51, 177-248, and 346-409; these read MRIP…RTRP, GPRE…QFDR, and AGGG…WRPY. Residues 7–17 are compositionally biased toward polar residues; that stretch reads PSTSRRFTPPS. Residues 55–183 form the Runt domain; that stretch reads SMVDVLADHA…TVDGPREPRR (129 aa). Basic and acidic residues predominate over residues 187 to 204; the sequence is KIEDQTKAFPDRFGDLRM. Lys-193 participates in a covalent cross-link: Glycyl lysine isopeptide (Lys-Gly) (interchain with G-Cter in SUMO2). A compositionally biased stretch (polar residues) spans 207–238; that stretch reads TPSTPSPRGSLSTTSHFSSQAQTPIQGSSDLN. Phosphoserine is present on Ser-241. Composition is skewed to polar residues over residues 355–376 and 387–396; these read RMLTSCPSGASVSAGNLMNPSL and SHSNSPTALS. A compositionally biased stretch (basic and acidic residues) spans 400–409; it reads RMDEAVWRPY.

As to quaternary structure, heterodimer with CBFB. RUNX3 binds DNA as a monomer and through the Runt domain. DNA-binding is increased by heterodimerization. Interacts with TLE1 and SUV39H1. The tyrosine phosphorylated form (via runt domain) interacts with SRC (via protein kinase domain). Interacts with FYN and LCK. Interacts with FOXP3. Interacts with ZFHX3. Interacts with TBX21. Post-translationally, phosphorylated on tyrosine residues by SRC. Phosphorylated by LCK and FYN.

The protein localises to the nucleus. It is found in the cytoplasm. Forms the heterodimeric complex core-binding factor (CBF) with CBFB. RUNX members modulate the transcription of their target genes through recognizing the core consensus binding sequence 5'-TGTGGT-3', or very rarely, 5'-TGCGGT-3', within their regulatory regions via their runt domain, while CBFB is a non-DNA-binding regulatory subunit that allosterically enhances the sequence-specific DNA-binding capacity of RUNX. The heterodimers bind to the core site of a number of enhancers and promoters, including murine leukemia virus, polyomavirus enhancer, T-cell receptor enhancers, LCK, IL3 and GM-CSF promoters. May be involved in the control of cellular proliferation and/or differentiation. In association with ZFHX3, up-regulates CDKN1A promoter activity following TGF-beta stimulation. CBF complexes repress ZBTB7B transcription factor during cytotoxic (CD8+) T cell development. They bind to RUNX-binding sequence within the ZBTB7B locus acting as transcriptional silencer and allowing for cytotoxic T cell differentiation. CBF complexes binding to the transcriptional silencer is essential for recruitment of nuclear protein complexes that catalyze epigenetic modifications to establish epigenetic ZBTB7B silencing. Necessary for the development and survival of sensory neurons expressing parvalbumin. This is Runt-related transcription factor 3 (Runx3) from Mus musculus (Mouse).